The following is a 428-amino-acid chain: Kynureninase (428 aa).

Pyridoxal 5'-phosphate contacts are provided by residues threonine 104, threonine 105, 132–135, aspartate 213, histidine 216, and tyrosine 238; that span reads FPSD. Lysine 239 bears the N6-(pyridoxal phosphate)lysine mark. Positions 267 and 295 each coordinate pyridoxal 5'-phosphate.

It belongs to the kynureninase family. As to quaternary structure, homodimer. Pyridoxal 5'-phosphate is required as a cofactor.

It catalyses the reaction L-kynurenine + H2O = anthranilate + L-alanine + H(+). The catalysed reaction is 3-hydroxy-L-kynurenine + H2O = 3-hydroxyanthranilate + L-alanine + H(+). It functions in the pathway amino-acid degradation; L-kynurenine degradation; L-alanine and anthranilate from L-kynurenine: step 1/1. The protein operates within cofactor biosynthesis; NAD(+) biosynthesis; quinolinate from L-kynurenine: step 2/3. Functionally, catalyzes the cleavage of L-kynurenine (L-Kyn) and L-3-hydroxykynurenine (L-3OHKyn) into anthranilic acid (AA) and 3-hydroxyanthranilic acid (3-OHAA), respectively. The polypeptide is Kynureninase (Geobacillus thermodenitrificans (strain NG80-2)).